The following is a 427-amino-acid chain: Trigger factor (427 aa).

Residues 163 to 248 (GDTVVIDFVG…VHEVKAKEVP (86 aa)) form the PPIase FKBP-type domain.

It belongs to the FKBP-type PPIase family. Tig subfamily.

It is found in the cytoplasm. The catalysed reaction is [protein]-peptidylproline (omega=180) = [protein]-peptidylproline (omega=0). Involved in protein export. Acts as a chaperone by maintaining the newly synthesized protein in an open conformation. Functions as a peptidyl-prolyl cis-trans isomerase. The protein is Trigger factor of Streptococcus equi subsp. equi (strain 4047).